Consider the following 168-residue polypeptide: Endoribonuclease YbeY (168 aa).

Zn(2+) is bound by residues H128, H132, and H138.

It belongs to the endoribonuclease YbeY family. Zn(2+) is required as a cofactor.

The protein resides in the cytoplasm. Functionally, single strand-specific metallo-endoribonuclease involved in late-stage 70S ribosome quality control and in maturation of the 3' terminus of the 16S rRNA. The chain is Endoribonuclease YbeY from Sphingopyxis alaskensis (strain DSM 13593 / LMG 18877 / RB2256) (Sphingomonas alaskensis).